The primary structure comprises 786 residues: Cadherin-9 (786 aa).

Positions methionine 1–asparagine 21 are cleaved as a signal peptide. A glycan (N-linked (GlcNAc...) asparagine) is linked at asparagine 21. Residues serine 22–arginine 52 constitute a propeptide that is removed on maturation. The Extracellular segment spans residues serine 22 to alanine 614. Cadherin domains follow at residues tryptophan 54–phenylalanine 158, threonine 159–phenylalanine 267, proline 268–phenylalanine 382, serine 383–phenylalanine 487, and phenylalanine 487–leucine 604. An N-linked (GlcNAc...) asparagine glycan is attached at asparagine 254. Asparagine 454 and asparagine 535 each carry an N-linked (GlcNAc...) asparagine glycan. A helical membrane pass occupies residues leucine 615 to leucine 635. Residues lysine 636–aspartate 786 are Cytoplasmic-facing. Serine 785 is modified (phosphoserine).

The protein resides in the cell membrane. In terms of biological role, cadherins are calcium-dependent cell adhesion proteins. They preferentially interact with themselves in a homophilic manner in connecting cells; cadherins may thus contribute to the sorting of heterogeneous cell types. This chain is Cadherin-9 (Cdh9), found in Mus musculus (Mouse).